The following is a 464-amino-acid chain: MMARRDPKSWAKRLVRAQTLQKQRRAPVGPRSPPPDEEDPRLKCKNCGAFGHTARSTRCPMKCWKAALVPATLGKKEGKENLKPWKPRAEANPGPLNKDKGEKEERPRQQDPQRKALLHMFSGKPPEKPLPNGKGSTESSDYLRVASGPMPVHTTSKRPRLDPVLADRSATEMSGRGSVLASLSPLRKASLSSSSSLGPKERQTGAAADMPQPAVRHQGREPLLVVKPTHSRPEGGCREVPQAASKTHGLLQAARPQAQDKRPAVTPQPCPPAATHSLGLGSNLSFGPGAKRPAQAPIQACLNFPKKPRLGPFQIPESAIQGGELGAPENLQPPPAATELGPSTSPQMGRRTPAQVPSVDRQPPHSRPCLPTAQACTMSHHPAASHDGAQPLRVLFRRLENGRWSSSLLAAPSFHSPEKPGAFLAQSPHVSEKSEAPCVRVPPSVLYEDLQVSSSSEDSDSDLE.

Disordered stretches follow at residues 1 to 42 (MMAR…DPRL), 69 to 389 (VPAT…HDGA), and 415 to 437 (HSPEKPGAFLAQSPHVSEKSEAP). Composition is skewed to basic and acidic residues over residues 74–89 (GKKEGKENLKPWKPRA) and 97–114 (NKDKGEKEERPRQQDPQR). Low complexity predominate over residues 180 to 197 (LASLSPLRKASLSSSSSL).

The protein belongs to the FAM90 family.

The polypeptide is Protein FAM90A23 (Homo sapiens (Human)).